The following is a 490-amino-acid chain: Betaine aldehyde dehydrogenase (490 aa).

Residues Thr-26, Ile-27, and Asp-93 each coordinate K(+). 150–152 (GAW) contacts NAD(+). Lys-162 serves as the catalytic Charge relay system. 176 to 179 (KPSE) is a binding site for NAD(+). Val-180 lines the K(+) pocket. Residue 230–233 (GVAS) coordinates NAD(+). Leu-246 provides a ligand contact to K(+). The active-site Proton acceptor is Glu-252. NAD(+) is bound by residues Gly-254, Cys-286, and Glu-387. Cys-286 acts as the Nucleophile in catalysis. Cys-286 is modified (cysteine sulfenic acid (-SOH)). Lys-457 and Gly-460 together coordinate K(+). Residue Glu-464 is the Charge relay system of the active site.

The protein belongs to the aldehyde dehydrogenase family. Dimer of dimers. Requires K(+) as cofactor.

It carries out the reaction betaine aldehyde + NAD(+) + H2O = glycine betaine + NADH + 2 H(+). Its pathway is amine and polyamine biosynthesis; betaine biosynthesis via choline pathway; betaine from betaine aldehyde: step 1/1. In terms of biological role, involved in the biosynthesis of the osmoprotectant glycine betaine. Catalyzes the irreversible oxidation of betaine aldehyde to the corresponding acid. The chain is Betaine aldehyde dehydrogenase from Escherichia coli (strain SMS-3-5 / SECEC).